The sequence spans 186 residues: Orotate phosphoribosyltransferase (186 aa).

5-phospho-alpha-D-ribose 1-diphosphate is bound by residues arginine 93, lysine 94, lysine 97, histidine 99, and 119–127 (EDVTTTGGS). Positions 123 and 151 each coordinate orotate.

Belongs to the purine/pyrimidine phosphoribosyltransferase family. PyrE subfamily. Homodimer. Mg(2+) serves as cofactor.

It catalyses the reaction orotidine 5'-phosphate + diphosphate = orotate + 5-phospho-alpha-D-ribose 1-diphosphate. It functions in the pathway pyrimidine metabolism; UMP biosynthesis via de novo pathway; UMP from orotate: step 1/2. In terms of biological role, catalyzes the transfer of a ribosyl phosphate group from 5-phosphoribose 1-diphosphate to orotate, leading to the formation of orotidine monophosphate (OMP). The polypeptide is Orotate phosphoribosyltransferase (Pyrococcus horikoshii (strain ATCC 700860 / DSM 12428 / JCM 9974 / NBRC 100139 / OT-3)).